A 234-amino-acid polypeptide reads, in one-letter code: Ribonuclease HII (234 aa).

In terms of domain architecture, RNase H type-2 spans 16–207 (ALVAGVDEAG…VRRMLTPKAI (192 aa)). Residues Asp-22, Glu-23, and Asp-115 each coordinate a divalent metal cation.

Belongs to the RNase HII family. The cofactor is Mn(2+). Mg(2+) is required as a cofactor.

The protein localises to the cytoplasm. It catalyses the reaction Endonucleolytic cleavage to 5'-phosphomonoester.. Its function is as follows. Endonuclease that specifically degrades the RNA of RNA-DNA hybrids. This Xylella fastidiosa (strain M23) protein is Ribonuclease HII.